The following is a 354-amino-acid chain: Erythroferrone (354 aa).

Residues 1-28 form the signal peptide; sequence MAPARRPAGARLLLVYAGLLAAAAAGLG. 2 stretches are compositionally biased toward low complexity: residues 26-37 and 51-62; these read GLGSPEPGAPSR and PRGPGESRAGPA. Residues 26–123 are disordered; that stretch reads GLGSPEPGAP…PGPPGPQGPP (98 aa). Over residues 69–80 the composition is skewed to basic and acidic residues; the sequence is TAERAHSVDPRD. Residues 94–107 are compositionally biased toward basic residues; the sequence is NGKKRSRGKAKKLK. A hydroxyproline mark is found at P111, P113, P114, P116, P117, and P119. The span at 111 to 123 shows a compositional bias: pro residues; that stretch reads PGPPGPPGPQGPP. In terms of domain architecture, C1q spans 199–354; it reads APRVEAAFLC…SHFSAVLLGV (156 aa). N-linked (GlcNAc...) asparagine glycosylation is found at N243, N295, and N333.

This sequence belongs to the adipolin/erythroferrone family. As to quaternary structure, homodimer; disulfide-linked. Forms trimer, hexamers and higher molecular weight oligomers. May form heteromeric complexes with C1QTNF2 and C1QTNF12 and, to a lesser extent, with C1QTNF5 and C1QTNF10. Interacts with BMP5 and BMP7; the interaction inhibits BMP-induced transcription of HAMP. Interacts with BMP6; the interaction inhibits BMP-induced transcription of HAMP. Interacts with BMP2. Interacts with heterodimers composed of BMP2 and BMP6 in vitro, the interaction inhibits the heterodimer binding to its receptor BMPR1A /ALK3 and thereby suppresses expression of HAMP. Post-translationally, N-glycosylated; required for secretion of the mature protein.

Its subcellular location is the secreted. In terms of biological role, iron-regulatory hormone that acts as an erythroid regulator after hemorrhage: produced by erythroblasts following blood loss and mediates suppression of hepcidin (HAMP) expression in the liver, thereby promoting increased iron absorption and mobilization from stores. Promotes lipid uptake into adipocytes and hepatocytes via transcriptional up-regulation of genes involved in fatty acid uptake. Inhibits apoptosis and inflammatory response in cardiomyocytes via promotion of sphingosine-1-phosphate (S1P) and cAMP-dependent activation of AKT signaling. Inhibits autophagy induced by nutrient deficiency in hepatocytes via promoting the phosphorylation of IRS1, AKT, and MTOR, and thereby subsequent activation of the AKT-MTOR signaling pathway. Negatively regulates the differentiation of osteoblasts, potentially via sequestering BMP2, and thereby inhibits the activation of SMAD signaling. The reduction in BMP2 signaling in osteoblasts also results in an increase in expression of the osteoclastogenesis-promoting factors TNFSF11/RANKL and SOST, thereby indirectly promotes bone resorption. This Homo sapiens (Human) protein is Erythroferrone.